The primary structure comprises 588 residues: Snake venom 5'-nucleotidase (588 aa).

A signal peptide spans 1–40 (MQTPKRRRGAQGCPRSSPSPPLLLLVRAVWFCAALSVAAG). Zn(2+) contacts are provided by Asp51 and His53. Cys66 and Cys71 are oxidised to a cystine. Positions 99 and 131 each coordinate Zn(2+). N-linked (GlcNAc...) asparagine glycosylation is present at Asn167. His234 and His257 together coordinate Zn(2+). Residues Asn347 and Asn361 are each glycosylated (N-linked (GlcNAc...) asparagine). 2 cysteine pairs are disulfide-bonded: Cys367–Cys372 and Cys379–Cys401. Arg368 provides a ligand contact to AMP. Positions 404 and 409 each coordinate AMP. Asn418 carries an N-linked (GlcNAc...) asparagine glycan. Phe432 is an AMP binding site. The cysteines at positions 491 and 494 are disulfide-linked. 2 residues coordinate AMP: Phe515 and Asp521. Asn532 is a glycosylation site (N-linked (GlcNAc...) asparagine). A lipid anchor (GPI-anchor amidated serine) is attached at Ser564. The propeptide at 565 to 588 (AGTLFQAQLFLTWGLCVSLLYFIL) is removed in mature form.

This sequence belongs to the 5'-nucleotidase family. The cofactor is Zn(2+). In terms of processing, venom 5'-nucleotidases (or a part thereof) may be released into the venom via exosome-like vesicles. They may be attached via a GPI anchor to the membrane of these vesicles. Soluble forms of 5'-nucleotidase might be released by cleavage of the ectodomain in the exosome-like vesicles or venom gland cells. Expressed by the venom gland.

It localises to the membrane. The enzyme catalyses a ribonucleoside 5'-phosphate + H2O = a ribonucleoside + phosphate. In terms of biological role, hydrolyzes nucleotides into nucleosides. Snake venom 5'-nucleotidases are widely distributed among venomous snake taxa, but there is a lack of information about their biological activities. They have been shown to inhibit platelet aggregation. This effect may be due to the liberation of inhibitory AMP or adenosine by its action on ADP released upon initiation of aggregation. Venom 5'-nucleotidases are also known to synergistically act in vivo with other toxins like ADPases, phospholipases, and disintegrins to exert a more pronounced anti-coagulant effect. This Crotalus adamanteus (Eastern diamondback rattlesnake) protein is Snake venom 5'-nucleotidase.